The primary structure comprises 358 residues: UDP-N-acetylglucosamine--N-acetylmuramyl-(pentapeptide) pyrophosphoryl-undecaprenol N-acetylglucosamine transferase (358 aa).

Residues 11-13, Asn124, Arg164, Ser195, and Gln291 contribute to the UDP-N-acetyl-alpha-D-glucosamine site; that span reads TGG.

The protein belongs to the glycosyltransferase 28 family. MurG subfamily.

Its subcellular location is the cell inner membrane. It catalyses the reaction di-trans,octa-cis-undecaprenyl diphospho-N-acetyl-alpha-D-muramoyl-L-alanyl-D-glutamyl-meso-2,6-diaminopimeloyl-D-alanyl-D-alanine + UDP-N-acetyl-alpha-D-glucosamine = di-trans,octa-cis-undecaprenyl diphospho-[N-acetyl-alpha-D-glucosaminyl-(1-&gt;4)]-N-acetyl-alpha-D-muramoyl-L-alanyl-D-glutamyl-meso-2,6-diaminopimeloyl-D-alanyl-D-alanine + UDP + H(+). The protein operates within cell wall biogenesis; peptidoglycan biosynthesis. Cell wall formation. Catalyzes the transfer of a GlcNAc subunit on undecaprenyl-pyrophosphoryl-MurNAc-pentapeptide (lipid intermediate I) to form undecaprenyl-pyrophosphoryl-MurNAc-(pentapeptide)GlcNAc (lipid intermediate II). The polypeptide is UDP-N-acetylglucosamine--N-acetylmuramyl-(pentapeptide) pyrophosphoryl-undecaprenol N-acetylglucosamine transferase (Leptospira interrogans serogroup Icterohaemorrhagiae serovar copenhageni (strain Fiocruz L1-130)).